The chain runs to 291 residues: 33 kDa chaperonin (291 aa).

2 disulfides stabilise this stretch: Cys-229–Cys-231 and Cys-262–Cys-265.

It belongs to the HSP33 family. Post-translationally, under oxidizing conditions two disulfide bonds are formed involving the reactive cysteines. Under reducing conditions zinc is bound to the reactive cysteines and the protein is inactive.

The protein resides in the cytoplasm. Functionally, redox regulated molecular chaperone. Protects both thermally unfolding and oxidatively damaged proteins from irreversible aggregation. Plays an important role in the bacterial defense system toward oxidative stress. The protein is 33 kDa chaperonin of Vibrio cholerae serotype O1 (strain ATCC 39315 / El Tor Inaba N16961).